The following is a 537-amino-acid chain: Copine-1 (537 aa).

C2 domains lie at M1–L114 and G123–H245. Ca(2+) contacts are provided by D21, D27, D80, D82, D92, D153, and D159. N6-acetyllysine is present on K171. Ca(2+) is bound by residues D214, D216, and D222. Positions N285–V505 constitute a VWFA domain.

It belongs to the copine family. As to quaternary structure, homodimer; homodimerizes via its C2 domains. Interacts with p65/RELA (via N-terminus); this interaction induces proteolytic cleavage of p65/RELA subunit and inhibition of NF-kappa-B transcriptional activity. Interacts (via VWFA domain) with ACTB, CCDC22, MYCBP2, PPP5C, RDX and UBE2O. Ca(2+) is required as a cofactor. Expressed in liver, spleen, muscle, testis, adrenal (at protein level).

The protein resides in the nucleus. It is found in the cytoplasm. The protein localises to the cell membrane. Functionally, calcium-dependent phospholipid-binding protein that plays a role in calcium-mediated intracellular processes. Involved in the TNF-alpha receptor signaling pathway in a calcium-dependent manner. Exhibits calcium-dependent phospholipid binding properties. Plays a role in neuronal progenitor cell differentiation; induces neurite outgrowth via a AKT-dependent signaling cascade and calcium-independent manner. May recruit target proteins to the cell membrane in a calcium-dependent manner. May function in membrane trafficking. Involved in TNF-alpha-induced NF-kappa-B transcriptional repression by inducing endoprotease processing of the transcription factor NF-kappa-B p65/RELA subunit. Also induces endoprotease processing of NF-kappa-B p50/NFKB1, p52/NFKB2, RELB and REL. This chain is Copine-1, found in Bos taurus (Bovine).